We begin with the raw amino-acid sequence, 337 residues long: Low-density lipoprotein receptor class A domain-containing protein 3 (337 aa).

The signal sequence occupies residues 1–13 (MWLLYLILGSVES). Residues 14-169 (QLLPGNNHTT…NQLLYYPSIT (156 aa)) are Extracellular-facing. A glycan (N-linked (GlcNAc...) asparagine) is linked at asparagine 20. LDL-receptor class A domains lie at 24 to 61 (ECNI…KECP), 66 to 103 (RCGP…ENCT), and 108 to 144 (LCSN…EHCH). 9 disulfides stabilise this stretch: cysteine 25–cysteine 38, cysteine 33–cysteine 51, cysteine 45–cysteine 60, cysteine 67–cysteine 80, cysteine 74–cysteine 93, cysteine 87–cysteine 102, cysteine 109–cysteine 121, cysteine 116–cysteine 134, and cysteine 128–cysteine 143. N-linked (GlcNAc...) asparagine glycosylation occurs at asparagine 101. A helical membrane pass occupies residues 170-190 (YTIIGSSVIFVLVVALLALVL). The Cytoplasmic portion of the chain corresponds to 191–337 (HHQRKRNLMS…DDLPSTEVDV (147 aa)). Residues 243–253 (QQPVSVESPPS) are compositionally biased toward polar residues. The disordered stretch occupies residues 243–337 (QQPVSVESPP…DDLPSTEVDV (95 aa)). Residues 291–303 (RSRTGSSASAGST) are compositionally biased toward low complexity.

This sequence belongs to the LDLR family.

Its subcellular location is the cell membrane. The polypeptide is Low-density lipoprotein receptor class A domain-containing protein 3 (Xenopus tropicalis (Western clawed frog)).